Here is a 114-residue protein sequence, read N- to C-terminus: Iron-sulfur cluster insertion protein ErpA (114 aa).

3 residues coordinate iron-sulfur cluster: C42, C106, and C108.

It belongs to the HesB/IscA family. Homodimer. It depends on iron-sulfur cluster as a cofactor.

Its function is as follows. Required for insertion of 4Fe-4S clusters for at least IspG. This is Iron-sulfur cluster insertion protein ErpA from Citrobacter koseri (strain ATCC BAA-895 / CDC 4225-83 / SGSC4696).